The chain runs to 359 residues: 3-dehydroquinate synthase (359 aa).

NAD(+) contacts are provided by residues 69–74, 103–107, 127–128, lysine 140, lysine 149, and 167–170; these read DGEQHK, GVIGD, TT, and TLDT. 3 residues coordinate Zn(2+): glutamate 182, histidine 245, and histidine 262.

It belongs to the sugar phosphate cyclases superfamily. Dehydroquinate synthase family. Co(2+) serves as cofactor. The cofactor is Zn(2+). Requires NAD(+) as cofactor.

Its subcellular location is the cytoplasm. The enzyme catalyses 7-phospho-2-dehydro-3-deoxy-D-arabino-heptonate = 3-dehydroquinate + phosphate. Its pathway is metabolic intermediate biosynthesis; chorismate biosynthesis; chorismate from D-erythrose 4-phosphate and phosphoenolpyruvate: step 2/7. Catalyzes the conversion of 3-deoxy-D-arabino-heptulosonate 7-phosphate (DAHP) to dehydroquinate (DHQ). This Nitrosococcus oceani (strain ATCC 19707 / BCRC 17464 / JCM 30415 / NCIMB 11848 / C-107) protein is 3-dehydroquinate synthase.